A 393-amino-acid polypeptide reads, in one-letter code: Protein TsgA (393 aa).

12 helical membrane passes run 11–31 (WISF…GMVM), 51–71 (FLNA…EIVP), 78–98 (FGFL…SLAL), 101–121 (TAMF…TFLI), 134–154 (LLFT…IAAF), 162–182 (WYWV…LTFG), 206–226 (IGVL…LGFI), 245–265 (TLVS…SFIL), 273–293 (ILTV…TGTP), 297–317 (AWSI…IITL), 332–352 (FVLT…GPIV), and 361–381 (LLTA…LGFV).

It belongs to the major facilitator superfamily. TsgA family.

It localises to the cell inner membrane. In Shigella boydii serotype 4 (strain Sb227), this protein is Protein TsgA.